Reading from the N-terminus, the 873-residue chain is MLTAKEIRESFKQFFASKEHQIVPSAPMVVKGDPTLMFTNAGMNQFKDIILGNVPRKYPRVADSQKCLRVSGKHNDLEEVGHDTYHHTMFEMLGNWSFGDYFKKEAINWAWEYLVEVLKLNPERLYATVFEGSPAEGLDRDNEAAGYWEQYLPKDHILNGNKHDNFWEMGDTGPCGPCSEIHIDLRSDEERAAVSGADMVNKDHPQVIEIWNLVFMQFNRKADGSLEPLPAKVIDTGMGFERLCMALQGKTSNYDTDVFQPIIKVIAGMAGTTYGTDKQQDIAMRVIADHIRTIAFAITDGQLPSNAKAGYVIRRILRRAVRYGYTFLDRKEAFMYKLLPVLIETMGDAYPELIAQKTLIEKVIKEEEESFLRTLETGIRLLDKKMEETKAAGKTVLNGVDAFTLYDTYGFPLDLTELILRENGMEADIEEFNKAMQKQKERARNAAAIETGDWITLKDGECKFVGYDLFECEAEILRYRQIKQKNKVLYQIVLDQTPFYAEMGGQVGDTGWLIADDEKIDVIDTKRENNLPVHLVTKLPKDVTATFTAKINVKKRIQCECNHSATHLLHEALREVLGTHVEQKGSYVSPDSLRFDFSHFQKVTDEEIRKVEILVGEKIRANFPLEEHRNMPIAEAKALGAMALFGEKYGDEVRVVKYGSSVELCGGTHIPATGMIGSLRVIGESSIAAGVRRIEAVTAEGAEQFVYAQQDLIRELRALMNHMPNLAQAMKKSIEENAEMKKQIEDYIREKSMRLKEEIVAKASESNGIKVMQFVGKANADAMKNVAFQIKAETTDSFVFVAGIIDDNKCTLMLMLSDDLVKEGLHAGKIVKEAAKHIQGGGGGQPHFATAGGKNMEGLSIAVGAVKEAVGVQ.

Histidine 563, histidine 567, cysteine 665, and histidine 669 together coordinate Zn(2+).

This sequence belongs to the class-II aminoacyl-tRNA synthetase family. It depends on Zn(2+) as a cofactor.

It localises to the cytoplasm. The catalysed reaction is tRNA(Ala) + L-alanine + ATP = L-alanyl-tRNA(Ala) + AMP + diphosphate. Functionally, catalyzes the attachment of alanine to tRNA(Ala) in a two-step reaction: alanine is first activated by ATP to form Ala-AMP and then transferred to the acceptor end of tRNA(Ala). Also edits incorrectly charged Ser-tRNA(Ala) and Gly-tRNA(Ala) via its editing domain. The chain is Alanine--tRNA ligase from Parabacteroides distasonis (strain ATCC 8503 / DSM 20701 / CIP 104284 / JCM 5825 / NCTC 11152).